Consider the following 115-residue polypeptide: Hydrogenase maturation factor HypA (115 aa).

A Ni(2+)-binding site is contributed by His-2. Cys-73, Cys-76, Cys-89, and Cys-92 together coordinate Zn(2+).

This sequence belongs to the HypA/HybF family.

Its function is as follows. Involved in the maturation of [NiFe] hydrogenases. Required for nickel insertion into the metal center of the hydrogenase. This chain is Hydrogenase maturation factor HypA, found in Nitrosospira multiformis (strain ATCC 25196 / NCIMB 11849 / C 71).